A 500-amino-acid chain; its full sequence is FAD-linked oxidoreductase easE (500 aa).

Positions 37-220 (QGRIPLFTVG…TRATMRVFPD (184 aa)) constitute an FAD-binding PCMH-type domain.

Belongs to the oxygen-dependent FAD-linked oxidoreductase family. FAD serves as cofactor.

It functions in the pathway alkaloid biosynthesis; ergot alkaloid biosynthesis. Functionally, FAD-linked oxidoreductase; part of the gene cluster that mediates the biosynthesis of fungal ergot alkaloid. DmaW catalyzes the first step of ergot alkaloid biosynthesis by condensing dimethylallyl diphosphate (DMAP) and tryptophan to form 4-dimethylallyl-L-tryptophan. The second step is catalyzed by the methyltransferase easF that methylates 4-dimethylallyl-L-tryptophan in the presence of S-adenosyl-L-methionine, resulting in the formation of 4-dimethylallyl-L-abrine. The catalase easC and the FAD-dependent oxidoreductase easE then transform 4-dimethylallyl-L-abrine to chanoclavine-I which is further oxidized by easD in the presence of NAD(+), resulting in the formation of chanoclavine-I aldehyde. Chanoclavine-I aldehyde is the precursor of ergoamides and ergopeptines in Clavicipitaceae, and clavine-type alcaloids such as fumiclavine in Trichocomaceae. However, the metabolites downstream of chanoclavine-I aldehyde in Arthrodermataceae have not been identified yet. This is FAD-linked oxidoreductase easE from Arthroderma benhamiae (strain ATCC MYA-4681 / CBS 112371) (Trichophyton mentagrophytes).